A 96-amino-acid polypeptide reads, in one-letter code: Small ribosomal subunit protein bS16 (96 aa).

It belongs to the bacterial ribosomal protein bS16 family.

This chain is Small ribosomal subunit protein bS16, found in Oenococcus oeni (strain ATCC BAA-331 / PSU-1).